Consider the following 102-residue polypeptide: Large ribosomal subunit protein eL30 (102 aa).

Belongs to the eukaryotic ribosomal protein eL30 family. As to quaternary structure, part of the 50S ribosomal subunit.

This is Large ribosomal subunit protein eL30 from Thermococcus kodakarensis (strain ATCC BAA-918 / JCM 12380 / KOD1) (Pyrococcus kodakaraensis (strain KOD1)).